The following is a 246-amino-acid chain: Transcription factor MYB13 (246 aa).

HTH myb-type domains are found at residues 9 to 61 (KIGL…INYL) and 62 to 116 (RPDI…KKRL). DNA-binding regions (H-T-H motif) lie at residues 37 to 61 (WRAL…INYL) and 89 to 112 (WSAI…HTHL).

Expressed in roots and flowers. Expressed in shoot apex, axillary buds, at the basis of flowers and branching points of inflorescences.

Its subcellular location is the nucleus. Its function is as follows. Plays a regulatory role in meristem function. Functions as component of a regulatory network controlling the establishment and/or development of the shoot system by the regulation of apical meristem function. May play a role in tolerance to boric acid. In Arabidopsis thaliana (Mouse-ear cress), this protein is Transcription factor MYB13.